The chain runs to 110 residues: RNA silencing suppressor (110 aa).

Residues 50–53 (RRRR) form a basic region. Residues 60–81 (CERCYRVYPPLPFSKKCDNRTC) form a C4-type zinc finger.

It belongs to the carlaviruses nucleic acid-binding protein family.

Functionally, suppressor of viral-induced RNA silencing. The potential mechanism of action is based on sequestering siRNAs. The polypeptide is RNA silencing suppressor (Helenium virus S (HelVS)).